The chain runs to 138 residues: Histone H2AX (138 aa).

The segment at 1 to 23 (MSTTGKGGKAKGKTASSKQVSRS) is disordered. Serine 2 is modified (N-acetylserine). Residues lysine 6, lysine 9, lysine 11, lysine 13, and lysine 18 each carry the N6-acetyllysine modification. Position 123 is a phosphoserine (serine 123). A Glycyl lysine isopeptide (Lys-Gly) (interchain with G-Cter in ubiquitin) cross-link involves residue lysine 124. Phosphoserine occurs at positions 125, 130, and 135. The short motif at 135–136 (SQ) is the [ST]-Q motif element.

The protein belongs to the histone H2A family. In terms of assembly, the nucleosome is a histone octamer containing two molecules each of H2A, H2B, H3 and H4 assembled in one H3-H4 heterotetramer and two H2A-H2B heterodimers. The octamer wraps approximately 147 bp of DNA. In terms of processing, monoubiquitination of Lys-124 gives a specific tag for epigenetic transcriptional repression. Post-translationally, acetylation occurs almost exclusively in the MAC.

It localises to the nucleus. Its subcellular location is the chromosome. Its function is as follows. Core component of nucleosome. Nucleosomes wrap and compact DNA into chromatin, limiting DNA accessibility to the cellular machineries which require DNA as a template. Histones thereby play a central role in transcription regulation, DNA repair, DNA replication and chromosomal stability. DNA accessibility is regulated via a complex set of post-translational modifications of histones, also called histone code, and nucleosome remodeling. This chain is Histone H2AX (HTA1), found in Tetrahymena pyriformis.